We begin with the raw amino-acid sequence, 627 residues long: Glucokinase regulatory protein (627 aa).

SIS domains lie at 90-286 and 320-499; these read VQEV…QGVV and VGIS…LLGK. Residues 109–110, Glu-153, and 179–181 each bind beta-D-fructose 1-phosphate; these read TS and SVG. 109 to 110 serves as a coordination point for beta-D-fructose 6-phosphate; that stretch reads TS. A beta-D-fructose 6-phosphate-binding site is contributed by 179-181; the sequence is SVG. Residues 199–200 are important for interaction with GCK; that stretch reads AV. Glu-348 contributes to the beta-D-fructose 1-phosphate binding site. Residues 463-465 form an essential for interaction with GCK region; the sequence is LLF. Beta-D-fructose 1-phosphate is bound at residue Lys-514. A beta-D-fructose 6-phosphate-binding site is contributed by Lys-514.

The protein belongs to the GCKR family. Interacts (fructose 6-phosphate bound form) with GCK. As to expression, detected in liver (at protein level). Not detected in muscle, brain, heart, testis, intestine or spleen.

The protein localises to the cytoplasm. Its subcellular location is the nucleus. The protein resides in the mitochondrion. Regulates glucokinase (GCK) by forming an inactive complex with this enzyme. Acts by promoting GCK recruitment to the nucleus, possibly to provide a reserve of GCK that can be quickly released in the cytoplasm after a meal. The affinity of GCKR for GCK is modulated by fructose metabolites: GCKR with bound fructose 6-phosphate has increased affinity for GCK, while GCKR with bound fructose 1-phosphate has strongly decreased affinity for GCK and does not inhibit GCK activity. The chain is Glucokinase regulatory protein from Rattus norvegicus (Rat).